Consider the following 353-residue polypeptide: MAATKRKRRGGLAVQAKKLKRDAKDGKLPAKANDVSEEAAEEEKDRIPGPVCKGKWKNKERILIFSSRGINFRTRHLMQDLRMLMPHSKADTKMDRKDKLFVINEVCEMKNCNKCIYFEAKKKQDLYMWLSNSPHGPSAKFLVQNIHTLAELKMTGNCLKGSRPLLSFDPAFDELPHYALLKELLIQIFSTPRYHPKSQPFVDHVFTFTILDNRIWFRNFQIIEEDAALVEIGPRFVLNLIKIFQGSFGGPTLYENPHYQSPNMHRRVIRSITAAKYREKQQVKDVQKLRKKEPKTILPHDPTADVFVTPAEEKPVEIQWVKPEPKVDLKARKKRIYKRQRKMKQKMSSGNAK.

Basic residues predominate over residues 1 to 10 (MAATKRKRRG). The tract at residues 1–46 (MAATKRKRRGGLAVQAKKLKRDAKDGKLPAKANDVSEEAAEEEKDR) is disordered. The Brix domain occupies 60-249 (ERILIFSSRG…LIKIFQGSFG (190 aa)). K160 participates in a covalent cross-link: Glycyl lysine isopeptide (Lys-Gly) (interchain with G-Cter in SUMO2). S261 carries the post-translational modification Phosphoserine. The residue at position 276 (K276) is an N6-acetyllysine. Residues K314 and K322 each participate in a glycyl lysine isopeptide (Lys-Gly) (interchain with G-Cter in SUMO2) cross-link.

It belongs to the BRX1 family.

Its subcellular location is the nucleus. It localises to the nucleolus. Required for biogenesis of the 60S ribosomal subunit. The sequence is that of Ribosome biogenesis protein BRX1 homolog (BRIX1) from Bos taurus (Bovine).